The chain runs to 348 residues: Hereditary hemochromatosis protein homolog (348 aa).

An N-terminal signal peptide occupies residues 1–22 (MGPRARPALFFLILLRTVAAQG). Positions 23-114 (RPPRSHSLRY…IMDNHNHSKE (92 aa)) are alpha-1. Topologically, residues 23-306 (RPPRSHSLRY…WEPSLSNTLV (284 aa)) are extracellular. 3 N-linked (GlcNAc...) asparagine glycosylation sites follow: Asn110, Asn130, and Asn234. Positions 115–205 (SHTLQVILGC…ELGRGVLDQQ (91 aa)) are alpha-2. 2 disulfide bridges follow: Cys124–Cys187 and Cys225–Cys282. The segment at 206–297 (VPPLVKVTHH…GLDQPLTATW (92 aa)) is alpha-3. Positions 207-296 (PPLVKVTHHV…PGLDQPLTAT (90 aa)) constitute an Ig-like C1-type domain. Positions 298-306 (EPSLSNTLV) are connecting peptide. Residues 307-330 (TGVISGIAVCVIIFLIGILFRILR) traverse the membrane as a helical segment. Residues 331–348 (KRQASRGAMGDYVLAECE) lie on the Cytoplasmic side of the membrane.

Belongs to the MHC class I family. As to quaternary structure, binds TFR through the extracellular domain in a pH-dependent manner.

The protein resides in the cell membrane. Binds to transferrin receptor (TFR) and reduces its affinity for iron-loaded transferrin. This Dicerorhinus sumatrensis (Sumatran rhinoceros) protein is Hereditary hemochromatosis protein homolog (HFE).